The following is a 518-amino-acid chain: ATPase expression protein 2, mitochondrial (518 aa).

A mitochondrion-targeting transit peptide spans 1 to 15 (MLKKSRVLGKIPIPY).

Belongs to the AEP2 family. As to quaternary structure, binds to the 5'UTR of the OLI1 mRNA.

Its subcellular location is the mitochondrion. In terms of biological role, required for translation of the mitochondrial OLI1 transcript coding for the mitochondrial ATP synthase subunit 9. The chain is ATPase expression protein 2, mitochondrial (AEP2) from Kluyveromyces lactis (strain ATCC 8585 / CBS 2359 / DSM 70799 / NBRC 1267 / NRRL Y-1140 / WM37) (Yeast).